The sequence spans 491 residues: Ketol-acid reductoisomerase (NADP(+)) (491 aa).

One can recognise a KARI N-terminal Rossmann domain in the interval 15–208 (AQLGKCRFMG…GGHRAGVLES (194 aa)). Residues 45-48 (CGAQ), R68, R76, S78, and 108-110 (DKQ) each bind NADP(+). H132 is a catalytic residue. An NADP(+)-binding site is contributed by G158. KARI C-terminal knotted domains are found at residues 209–344 (SFVA…TAPQ) and 345–484 (YEGK…MTDM). Residues D217, E221, E389, and E393 each coordinate Mg(2+). S414 is a substrate binding site.

This sequence belongs to the ketol-acid reductoisomerase family. Requires Mg(2+) as cofactor.

The catalysed reaction is (2R)-2,3-dihydroxy-3-methylbutanoate + NADP(+) = (2S)-2-acetolactate + NADPH + H(+). It carries out the reaction (2R,3R)-2,3-dihydroxy-3-methylpentanoate + NADP(+) = (S)-2-ethyl-2-hydroxy-3-oxobutanoate + NADPH + H(+). It functions in the pathway amino-acid biosynthesis; L-isoleucine biosynthesis; L-isoleucine from 2-oxobutanoate: step 2/4. It participates in amino-acid biosynthesis; L-valine biosynthesis; L-valine from pyruvate: step 2/4. In terms of biological role, involved in the biosynthesis of branched-chain amino acids (BCAA). Catalyzes an alkyl-migration followed by a ketol-acid reduction of (S)-2-acetolactate (S2AL) to yield (R)-2,3-dihydroxy-isovalerate. In the isomerase reaction, S2AL is rearranged via a Mg-dependent methyl migration to produce 3-hydroxy-3-methyl-2-ketobutyrate (HMKB). In the reductase reaction, this 2-ketoacid undergoes a metal-dependent reduction by NADPH to yield (R)-2,3-dihydroxy-isovalerate. This is Ketol-acid reductoisomerase (NADP(+)) from Escherichia coli O157:H7.